The chain runs to 362 residues: MTATLERRQAQGLWDRFADWVTSTHNRFYVGWFGVLMIPTLLSATICFVIAFVAAPPVDMDGIREPISGSLLYGNNIITGAVIPSSNAIGLHFYPIWEAASMDEWLYNGGPYQLVVFHFLIGVFCYLGREWELSYRLGLRPWICIAYSAPVAAATAVFLVYPIGQGSFSDGMPLGISGTFNFMFVFQAEHNILNHPFHMLGVAGVFGGALISAMHGSLVTSSLVSETSYEESQNYGYKFGQAEETYNISAAHGYISRLVFQYFAFWGANSRSLHFIMAAFPVIGIWFTSLGISVMAFNLNGFNFNSSIVDSQGRAIYTWADIVNRANLGMEVMHERNAHNFPLDLAGTESAPVAVSTAKVGG.

Transmembrane regions (helical) follow at residues 29 to 46 (YVGWFGVLMIPTLLSATI), 118 to 133 (HFLIGVFCYLGREWEL), and 142 to 156 (WICIAYSAPVAAATA). His118 is a binding site for chlorophyll a. Tyr126 contacts pheophytin a. Positions 170 and 189 each coordinate [CaMn4O5] cluster. Residues 197 to 218 (FHMLGVAGVFGGALISAMHGSL) form a helical membrane-spanning segment. His198 is a chlorophyll a binding site. A quinone contacts are provided by residues His215 and 264-265 (AF). His215 is a Fe cation binding site. A Fe cation-binding site is contributed by His274. Residues 276-290 (IMAAFPVIGIWFTSL) traverse the membrane as a helical segment. [CaMn4O5] cluster contacts are provided by His334, Glu335, Asp344, and Ala346. Residues 347–362 (GTESAPVAVSTAKVGG) constitute a propeptide that is removed on maturation.

It belongs to the reaction center PufL/M/PsbA/D family. As to quaternary structure, PSII is composed of 1 copy each of membrane proteins PsbA, PsbB, PsbC, PsbD, PsbE, PsbF, PsbH, PsbI, PsbJ, PsbK, PsbL, PsbM, PsbT, PsbX, Psb30/Ycf12, peripheral proteins PsbO, CyanoQ (PsbQ), PsbU, PsbV and a large number of cofactors. It forms dimeric complexes. Requires The D1/D2 heterodimer binds P680, chlorophylls that are the primary electron donor of PSII, and subsequent electron acceptors. It shares a non-heme iron and each subunit binds pheophytin, quinone, additional chlorophylls, carotenoids and lipids. D1 provides most of the ligands for the Mn4-Ca-O5 cluster of the oxygen-evolving complex (OEC). There is also a Cl(-1) ion associated with D1 and D2, which is required for oxygen evolution. The PSII complex binds additional chlorophylls, carotenoids and specific lipids. as cofactor. Tyr-161 forms a radical intermediate that is referred to as redox-active TyrZ, YZ or Y-Z. Post-translationally, C-terminally processed by CtpA; processing is essential to allow assembly of the oxygen-evolving complex and thus photosynthetic growth.

Its subcellular location is the cell inner membrane. The enzyme catalyses 2 a plastoquinone + 4 hnu + 2 H2O = 2 a plastoquinol + O2. Functionally, photosystem II (PSII) is a light-driven water:plastoquinone oxidoreductase that uses light energy to abstract electrons from H(2)O, generating O(2) and a proton gradient subsequently used for ATP formation. It consists of a core antenna complex that captures photons, and an electron transfer chain that converts photonic excitation into a charge separation. The D1/D2 (PsbA/PsbD) reaction center heterodimer binds P680, the primary electron donor of PSII as well as several subsequent electron acceptors. This is Photosystem II protein D1 3 from Gloeobacter violaceus (strain ATCC 29082 / PCC 7421).